Reading from the N-terminus, the 81-residue chain is Putative membrane protein insertion efficiency factor 1 (81 aa).

The protein belongs to the UPF0161 family.

Its subcellular location is the cell membrane. In terms of biological role, could be involved in insertion of integral membrane proteins into the membrane. The protein is Putative membrane protein insertion efficiency factor 1 of Bacillus licheniformis (strain ATCC 14580 / DSM 13 / JCM 2505 / CCUG 7422 / NBRC 12200 / NCIMB 9375 / NCTC 10341 / NRRL NRS-1264 / Gibson 46).